The following is a 54-amino-acid chain: U7-ctenitoxin-Pk1a (54 aa).

5 disulfide bridges follow: cysteine 3–cysteine 17, cysteine 10–cysteine 23, cysteine 14–cysteine 52, cysteine 16–cysteine 37, and cysteine 25–cysteine 35.

As to expression, expressed by the venom gland.

The protein localises to the secreted. In terms of biological role, blocks voltage-gated sodium channels (Nav). Causes immediate spastic paralysis and death in mice within 1 minute of injection at dose levels of 1.5 ug per mouse. This chain is U7-ctenitoxin-Pk1a, found in Phoneutria keyserlingi (Brazilian wandering spider).